We begin with the raw amino-acid sequence, 80 residues long: Large ribosomal subunit protein bL31B (80 aa).

This sequence belongs to the bacterial ribosomal protein bL31 family. Type B subfamily. Part of the 50S ribosomal subunit.

This chain is Large ribosomal subunit protein bL31B, found in Oenococcus oeni (strain ATCC BAA-331 / PSU-1).